Here is a 67-residue protein sequence, read N- to C-terminus: Large ribosomal subunit protein bL32 (67 aa).

Residues 1–19 are compositionally biased toward basic residues; that stretch reads MAVPKRKMSRSNTRARRSQ. The disordered stretch occupies residues 1–21; the sequence is MAVPKRKMSRSNTRARRSQWK.

The protein belongs to the bacterial ribosomal protein bL32 family.

The protein is Large ribosomal subunit protein bL32 of Clavibacter sepedonicus (Clavibacter michiganensis subsp. sepedonicus).